We begin with the raw amino-acid sequence, 433 residues long: Histidinol dehydrogenase (433 aa).

The NAD(+) site is built by Y133, Q194, and N217. 3 residues coordinate substrate: S240, Q262, and H265. Zn(2+)-binding residues include Q262 and H265. Catalysis depends on proton acceptor residues E330 and H331. 4 residues coordinate substrate: H331, D364, E418, and H423. D364 contributes to the Zn(2+) binding site. H423 is a binding site for Zn(2+).

Belongs to the histidinol dehydrogenase family. Zn(2+) serves as cofactor.

It carries out the reaction L-histidinol + 2 NAD(+) + H2O = L-histidine + 2 NADH + 3 H(+). Its pathway is amino-acid biosynthesis; L-histidine biosynthesis; L-histidine from 5-phospho-alpha-D-ribose 1-diphosphate: step 9/9. In terms of biological role, catalyzes the sequential NAD-dependent oxidations of L-histidinol to L-histidinaldehyde and then to L-histidine. The sequence is that of Histidinol dehydrogenase from Hydrogenovibrio crunogenus (strain DSM 25203 / XCL-2) (Thiomicrospira crunogena).